Reading from the N-terminus, the 240-residue chain is Ribonuclease PH (240 aa).

Residues Arg87 and 125-127 (GTR) each bind phosphate.

Belongs to the RNase PH family. As to quaternary structure, homohexameric ring arranged as a trimer of dimers.

It carries out the reaction tRNA(n+1) + phosphate = tRNA(n) + a ribonucleoside 5'-diphosphate. Phosphorolytic 3'-5' exoribonuclease that plays an important role in tRNA 3'-end maturation. Removes nucleotide residues following the 3'-CCA terminus of tRNAs; can also add nucleotides to the ends of RNA molecules by using nucleoside diphosphates as substrates, but this may not be physiologically important. Probably plays a role in initiation of 16S rRNA degradation (leading to ribosome degradation) during starvation. The sequence is that of Ribonuclease PH from Pseudomonas syringae pv. tomato (strain ATCC BAA-871 / DC3000).